A 245-amino-acid polypeptide reads, in one-letter code: Uridylate kinase (245 aa).

12 to 15 (KLSG) provides a ligand contact to ATP. The segment at 20 to 25 (GEKGVG) is involved in allosteric activation by GTP. G54 provides a ligand contact to UMP. G55 and R59 together coordinate ATP. Residues D74 and 135-142 (VGSPYFST) contribute to the UMP site. ATP contacts are provided by N163, Y169, and D172.

This sequence belongs to the UMP kinase family. In terms of assembly, homohexamer.

It is found in the cytoplasm. It carries out the reaction UMP + ATP = UDP + ADP. Its pathway is pyrimidine metabolism; CTP biosynthesis via de novo pathway; UDP from UMP (UMPK route): step 1/1. With respect to regulation, allosterically activated by GTP. Inhibited by UTP. Its function is as follows. Catalyzes the reversible phosphorylation of UMP to UDP. The sequence is that of Uridylate kinase from Streptococcus mutans serotype c (strain ATCC 700610 / UA159).